The primary structure comprises 81 residues: ATP synthase subunit c, chloroplastic (81 aa).

2 helical membrane passes run 3–23 (PIIS…ASIG) and 57–77 (LAFM…LLFA).

The protein belongs to the ATPase C chain family. F-type ATPases have 2 components, F(1) - the catalytic core - and F(0) - the membrane proton channel. F(1) has five subunits: alpha(3), beta(3), gamma(1), delta(1), epsilon(1). F(0) has four main subunits: a(1), b(1), b'(1) and c(10-14). The alpha and beta chains form an alternating ring which encloses part of the gamma chain. F(1) is attached to F(0) by a central stalk formed by the gamma and epsilon chains, while a peripheral stalk is formed by the delta, b and b' chains.

Its subcellular location is the plastid. It localises to the chloroplast thylakoid membrane. Functionally, f(1)F(0) ATP synthase produces ATP from ADP in the presence of a proton or sodium gradient. F-type ATPases consist of two structural domains, F(1) containing the extramembraneous catalytic core and F(0) containing the membrane proton channel, linked together by a central stalk and a peripheral stalk. During catalysis, ATP synthesis in the catalytic domain of F(1) is coupled via a rotary mechanism of the central stalk subunits to proton translocation. Key component of the F(0) channel; it plays a direct role in translocation across the membrane. A homomeric c-ring of between 10-14 subunits forms the central stalk rotor element with the F(1) delta and epsilon subunits. This Welwitschia mirabilis (Tree tumbo) protein is ATP synthase subunit c, chloroplastic.